A 101-amino-acid chain; its full sequence is Small ribosomal subunit protein uS14 (101 aa).

Residues 1–21 (MAKTSAVEKNKRRRKSVAQQA) form a disordered region.

It belongs to the universal ribosomal protein uS14 family. As to quaternary structure, part of the 30S ribosomal subunit. Contacts proteins S3 and S10.

In terms of biological role, binds 16S rRNA, required for the assembly of 30S particles and may also be responsible for determining the conformation of the 16S rRNA at the A site. This chain is Small ribosomal subunit protein uS14, found in Agrobacterium fabrum (strain C58 / ATCC 33970) (Agrobacterium tumefaciens (strain C58)).